A 347-amino-acid polypeptide reads, in one-letter code: Holliday junction branch migration complex subunit RuvB (347 aa).

Positions 1 to 10 (MAIVSSSSGR) are enriched in polar residues. A disordered region spans residues 1 to 29 (MAIVSSSSGRKSPCRETALVDPQPAPEEQ). The tract at residues 13-198 (PCRETALVDP…FGLIQRLEFY (186 aa)) is large ATPase domain (RuvB-L). 9 residues coordinate ATP: Leu-37, Arg-38, Gly-79, Lys-82, Thr-83, Thr-84, Arg-188, Tyr-198, and Arg-235. Mg(2+) is bound at residue Thr-83. Positions 199–270 (GQTDLEAIVA…MVAEALSLHR (72 aa)) are small ATPAse domain (RuvB-S). The tract at residues 273–347 (HRGLDASDRR…AARSHIAEAA (75 aa)) is head domain (RuvB-H). DNA contacts are provided by Arg-328 and Arg-333.

It belongs to the RuvB family. As to quaternary structure, homohexamer. Forms an RuvA(8)-RuvB(12)-Holliday junction (HJ) complex. HJ DNA is sandwiched between 2 RuvA tetramers; dsDNA enters through RuvA and exits via RuvB. An RuvB hexamer assembles on each DNA strand where it exits the tetramer. Each RuvB hexamer is contacted by two RuvA subunits (via domain III) on 2 adjacent RuvB subunits; this complex drives branch migration. In the full resolvosome a probable DNA-RuvA(4)-RuvB(12)-RuvC(2) complex forms which resolves the HJ.

The protein localises to the cytoplasm. The catalysed reaction is ATP + H2O = ADP + phosphate + H(+). In terms of biological role, the RuvA-RuvB-RuvC complex processes Holliday junction (HJ) DNA during genetic recombination and DNA repair, while the RuvA-RuvB complex plays an important role in the rescue of blocked DNA replication forks via replication fork reversal (RFR). RuvA specifically binds to HJ cruciform DNA, conferring on it an open structure. The RuvB hexamer acts as an ATP-dependent pump, pulling dsDNA into and through the RuvAB complex. RuvB forms 2 homohexamers on either side of HJ DNA bound by 1 or 2 RuvA tetramers; 4 subunits per hexamer contact DNA at a time. Coordinated motions by a converter formed by DNA-disengaged RuvB subunits stimulates ATP hydrolysis and nucleotide exchange. Immobilization of the converter enables RuvB to convert the ATP-contained energy into a lever motion, pulling 2 nucleotides of DNA out of the RuvA tetramer per ATP hydrolyzed, thus driving DNA branch migration. The RuvB motors rotate together with the DNA substrate, which together with the progressing nucleotide cycle form the mechanistic basis for DNA recombination by continuous HJ branch migration. Branch migration allows RuvC to scan DNA until it finds its consensus sequence, where it cleaves and resolves cruciform DNA. The sequence is that of Holliday junction branch migration complex subunit RuvB from Synechococcus sp. (strain CC9902).